Consider the following 239-residue polypeptide: Ribose-5-phosphate isomerase A (239 aa).

Substrate-binding positions include 40–43, 96–99, and 110–113; these read SGST, DGAD, and KGGG. The Proton acceptor role is filled by Glu119. Lys137 is a binding site for substrate.

Belongs to the ribose 5-phosphate isomerase family. As to quaternary structure, homodimer.

The catalysed reaction is aldehydo-D-ribose 5-phosphate = D-ribulose 5-phosphate. It functions in the pathway carbohydrate degradation; pentose phosphate pathway; D-ribose 5-phosphate from D-ribulose 5-phosphate (non-oxidative stage): step 1/1. In terms of biological role, catalyzes the reversible conversion of ribose-5-phosphate to ribulose 5-phosphate. The chain is Ribose-5-phosphate isomerase A from Methanococcus maripaludis (strain C5 / ATCC BAA-1333).